The sequence spans 115 residues: Nucleoid-associated protein alr5067 (115 aa).

The protein belongs to the YbaB/EbfC family. As to quaternary structure, homodimer.

It localises to the cytoplasm. It is found in the nucleoid. Functionally, binds to DNA and alters its conformation. May be involved in regulation of gene expression, nucleoid organization and DNA protection. The polypeptide is Nucleoid-associated protein alr5067 (Nostoc sp. (strain PCC 7120 / SAG 25.82 / UTEX 2576)).